The following is a 103-amino-acid chain: Large ribosomal subunit protein bL21 (103 aa).

It belongs to the bacterial ribosomal protein bL21 family. As to quaternary structure, part of the 50S ribosomal subunit. Contacts protein L20.

In terms of biological role, this protein binds to 23S rRNA in the presence of protein L20. The sequence is that of Large ribosomal subunit protein bL21 from Lactobacillus delbrueckii subsp. bulgaricus (strain ATCC 11842 / DSM 20081 / BCRC 10696 / JCM 1002 / NBRC 13953 / NCIMB 11778 / NCTC 12712 / WDCM 00102 / Lb 14).